We begin with the raw amino-acid sequence, 154 residues long: MAYAVVRVRGSVGVRGDIADTMKMLRLHRVNHCVIIPDTEHYTGMIKKVKDYVTYGEIDKDTLVALILKRGRLPGNKRLSEELVKELTELPVEELAEKVIAGEIKIKDTPIKPVFRLHPPRKGYDRAGVKKGFSIGGALGYRSGKINDLLNKMM.

It belongs to the universal ribosomal protein uL30 family. Part of the 50S ribosomal subunit.

This is Large ribosomal subunit protein uL30 from Methanococcus maripaludis (strain DSM 14266 / JCM 13030 / NBRC 101832 / S2 / LL).